The chain runs to 630 residues: Auxin efflux carrier component 2 (630 aa).

The Extracellular portion of the chain corresponds to 1–6; it reads MITGRD. Residues 7–27 form a helical membrane-spanning segment; that stretch reads IYDVLAAIVPLYVAMFLAYGS. The Cytoplasmic portion of the chain corresponds to 28–38; sequence VRWWGIFTPDQ. A helical transmembrane segment spans residues 39 to 59; it reads CSGINRFVAVFAVPLLSFHFI. Valine 51 lines the (indol-3-yl)acetate pocket. At 60–70 the chain is on the extracellular side; it reads STNDPYSMNYR. Residues 71-91 traverse the membrane as a helical segment; it reads FLAADSLQKLVILAALAVWHN. Over 92–108 the chain is Cytoplasmic; sequence LLSRYRRNGGAAASLDW. The helical transmembrane segment at 109 to 129 threads the bilayer; that stretch reads TITLFSLSTLPNTLVMGIPLL. 2 residues coordinate (indol-3-yl)acetate: asparagine 120 and leucine 122. The Extracellular segment spans residues 130–139; that stretch reads RAMYGDFSGS. The helical transmembrane segment at 140-160 threads the bilayer; that stretch reads LMVQIVVLQSVIWYTLMLFLF. Tyrosine 153 serves as a coordination point for (indol-3-yl)acetate. The Cytoplasmic portion of the chain corresponds to 161–490; that stretch reads EYRGAKALIS…LIRNPNTYSS (330 aa). Positions 317–350 are disordered; it reads ASGKAADPPSYPAPNPGMMPAPRKKELGGSNSNS. The span at 325–335 shows a compositional bias: pro residues; it reads PSYPAPNPGMM. Residues 491 to 511 form a helical membrane-spanning segment; that stretch reads LIGLVWSLVSFRWNIQMPSII. Residues 512–514 are Extracellular-facing; it reads KGS. Residues 515 to 535 traverse the membrane as a helical segment; the sequence is ISILSDAGLGMAMFSLGLFMA. Residues 536–549 are Cytoplasmic-facing; it reads LQPKIISCGKTVAT. Residues 550–570 form a helical membrane-spanning segment; sequence FAMAVRFLTGPAVIAATSIAI. The Extracellular segment spans residues 571-574; that stretch reads GLRG. A helical membrane pass occupies residues 575 to 595; it reads VLLHVAIVQAALPQGIVPFVF. (indol-3-yl)acetate is bound by residues isoleucine 590 and valine 591. Residues 596–609 are Cytoplasmic-facing; that stretch reads AKEYNCHPQILSTA. The chain crosses the membrane as a helical span at residues 610 to 630; sequence VIFGMLIALPITILYYVLLGI.

It belongs to the auxin efflux carrier (TC 2.A.69.1) family. Homodimer. Expressed in roots, leaves, shoot apex and panicles. Expressed in roots, stem bases and young panicles.

The protein localises to the membrane. Its function is as follows. Acts as a component of the auxin efflux carrier. Involved in the basipetal polar auxin transport which contributes to the spreading growth of the tillers. In Oryza sativa subsp. japonica (Rice), this protein is Auxin efflux carrier component 2.